We begin with the raw amino-acid sequence, 669 residues long: Threonine--tRNA ligase (669 aa).

A TGS domain is found at 3–60 (DAQQITLLVDGEETKVTTGTTGAELFFERRDVVVARVNGELKDLDQELPEGAEVEGVT). A catalytic region spans residues 260-566 (DHRKLGSELD…LTEHYAGAFP (307 aa)). 3 residues coordinate Zn(2+): Cys-365, His-416, and His-543.

This sequence belongs to the class-II aminoacyl-tRNA synthetase family. In terms of assembly, homodimer. Zn(2+) serves as cofactor.

The protein resides in the cytoplasm. The enzyme catalyses tRNA(Thr) + L-threonine + ATP = L-threonyl-tRNA(Thr) + AMP + diphosphate + H(+). Catalyzes the attachment of threonine to tRNA(Thr) in a two-step reaction: L-threonine is first activated by ATP to form Thr-AMP and then transferred to the acceptor end of tRNA(Thr). Also edits incorrectly charged L-seryl-tRNA(Thr). The sequence is that of Threonine--tRNA ligase from Pseudarthrobacter chlorophenolicus (strain ATCC 700700 / DSM 12829 / CIP 107037 / JCM 12360 / KCTC 9906 / NCIMB 13794 / A6) (Arthrobacter chlorophenolicus).